The following is a 1212-amino-acid chain: DNA-directed RNA polymerase subunit beta' (1212 aa).

4 residues coordinate Zn(2+): cysteine 60, cysteine 62, cysteine 75, and cysteine 78. Positions 450, 452, and 454 each coordinate Mg(2+). 4 residues coordinate Zn(2+): cysteine 819, cysteine 893, cysteine 900, and cysteine 903.

The protein belongs to the RNA polymerase beta' chain family. The RNAP catalytic core consists of 2 alpha, 1 beta, 1 beta' and 1 omega subunit. When a sigma factor is associated with the core the holoenzyme is formed, which can initiate transcription. Mg(2+) serves as cofactor. Requires Zn(2+) as cofactor.

It carries out the reaction RNA(n) + a ribonucleoside 5'-triphosphate = RNA(n+1) + diphosphate. In terms of biological role, DNA-dependent RNA polymerase catalyzes the transcription of DNA into RNA using the four ribonucleoside triphosphates as substrates. This Streptococcus thermophilus (strain ATCC BAA-491 / LMD-9) protein is DNA-directed RNA polymerase subunit beta'.